Consider the following 148-residue polypeptide: FAD synthase (148 aa).

Residues 9–10, 14–17, Asn-92, and Tyr-119 contribute to the ATP site; these read TF and HPGH.

The protein belongs to the archaeal FAD synthase family. Homodimer. A divalent metal cation is required as a cofactor.

It carries out the reaction FMN + ATP + H(+) = FAD + diphosphate. It functions in the pathway cofactor biosynthesis; FAD biosynthesis; FAD from FMN: step 1/1. Its function is as follows. Catalyzes the transfer of the AMP portion of ATP to flavin mononucleotide (FMN) to produce flavin adenine dinucleotide (FAD) coenzyme. The chain is FAD synthase from Methanolacinia petrolearia (strain DSM 11571 / OCM 486 / SEBR 4847) (Methanoplanus petrolearius).